The chain runs to 609 residues: UvrABC system protein C (609 aa).

Residues 16 to 94 (SSAGVYRMYD…IKQYMPKYNV (79 aa)) form the GIY-YIG domain. The region spanning 203 to 238 (KQVISELVAKMEEAAEQQAYEQAARFRDQIMALRRV) is the UVR domain.

This sequence belongs to the UvrC family. In terms of assembly, interacts with UvrB in an incision complex.

It is found in the cytoplasm. Functionally, the UvrABC repair system catalyzes the recognition and processing of DNA lesions. UvrC both incises the 5' and 3' sides of the lesion. The N-terminal half is responsible for the 3' incision and the C-terminal half is responsible for the 5' incision. The chain is UvrABC system protein C from Shewanella sp. (strain MR-4).